Consider the following 638-residue polypeptide: 1-deoxy-D-xylulose-5-phosphate synthase (638 aa).

Thiamine diphosphate-binding positions include His-79 and 120–122; that span reads GHS. Asp-151 provides a ligand contact to Mg(2+). Thiamine diphosphate-binding positions include 152 to 153, Asn-182, Tyr-291, and Glu-373; that span reads GA. Asn-182 is a Mg(2+) binding site.

It belongs to the transketolase family. DXPS subfamily. In terms of assembly, homodimer. Mg(2+) is required as a cofactor. It depends on thiamine diphosphate as a cofactor.

The enzyme catalyses D-glyceraldehyde 3-phosphate + pyruvate + H(+) = 1-deoxy-D-xylulose 5-phosphate + CO2. It participates in metabolic intermediate biosynthesis; 1-deoxy-D-xylulose 5-phosphate biosynthesis; 1-deoxy-D-xylulose 5-phosphate from D-glyceraldehyde 3-phosphate and pyruvate: step 1/1. Functionally, catalyzes the acyloin condensation reaction between C atoms 2 and 3 of pyruvate and glyceraldehyde 3-phosphate to yield 1-deoxy-D-xylulose-5-phosphate (DXP). The chain is 1-deoxy-D-xylulose-5-phosphate synthase from Xanthomonas campestris pv. campestris (strain 8004).